We begin with the raw amino-acid sequence, 157 residues long: Glutaredoxin-2, mitochondrial (157 aa).

The N-terminal 19 residues, 1 to 19 (MSWYRAASVGRRLVASGRI), are a transit peptide targeting the mitochondrion. Residues 50–150 (VNQIQETISN…PLVHQCYLNK (101 aa)) form the Glutaredoxin domain. Cys61 is a binding site for [2Fe-2S] cluster. Lys67 contacts glutathione. The residue at position 70 (Cys70) is an S-glutathionyl cysteine; alternate. Cysteines 70 and 73 form a disulfide. Residues Gln102 and Val114 each contribute to the glutathione site. Cys146 provides a ligand contact to [2Fe-2S] cluster.

The protein belongs to the glutaredoxin family. In terms of assembly, monomer; active form. Homodimer; inactive form. The homodimer is probably linked by 1 2Fe-2S cluster.

It localises to the mitochondrion. It is found in the nucleus. Its activity is regulated as follows. The 2Fe-2S present in the homodimer leads to inactivation of the enzyme. The 2Fe-2S may serve as a redox sensor: the presence of one-electron oxidants or reductants leading to the loss of the 2Fe-2S cluster, subsequent monomerization and activation of the enzyme. Functionally, glutathione-dependent oxidoreductase that facilitates the maintenance of mitochondrial redox homeostasis upon induction of apoptosis by oxidative stress. Involved in response to hydrogen peroxide and regulation of apoptosis caused by oxidative stress. Acts as a very efficient catalyst of monothiol reactions because of its high affinity for protein glutathione-mixed disulfides. Can receive electrons not only from glutathione (GSH), but also from thioredoxin reductase supporting both monothiol and dithiol reactions. Efficiently catalyzes both glutathionylation and deglutathionylation of mitochondrial complex I, which in turn regulates the superoxide production by the complex. Overexpression decreases the susceptibility to apoptosis and prevents loss of cardiolipin and cytochrome c release. This is Glutaredoxin-2, mitochondrial (Glrx2) from Rattus norvegicus (Rat).